Here is a 270-residue protein sequence, read N- to C-terminus: UPF0354 protein BCA_4815 (270 aa).

The protein belongs to the UPF0354 family.

The sequence is that of UPF0354 protein BCA_4815 from Bacillus cereus (strain 03BB102).